Consider the following 521-residue polypeptide: Histidine--tRNA ligase (521 aa).

Residues 137 to 139, arginine 164, glutamine 180, aspartate 184, arginine 338, and 342 to 343 each bind L-histidine; these read DLT and YY.

It belongs to the class-II aminoacyl-tRNA synthetase family.

It catalyses the reaction tRNA(His) + L-histidine + ATP = L-histidyl-tRNA(His) + AMP + diphosphate + H(+). Its function is as follows. Involved in protein synthesis. Catalyzes the specific attachment of an amino acid to its cognate tRNA in a 2 step reaction: the amino acid (AA) is first activated by ATP to form AA-AMP and then transferred to the acceptor end of the tRNA. Required for germ cell development. In Caenorhabditis elegans, this protein is Histidine--tRNA ligase.